Consider the following 206-residue polypeptide: Small ribosomal subunit protein uS4 (206 aa).

Positions 96–156 (TRLDNVVYRM…EKSRTQARIK (61 aa)) constitute an S4 RNA-binding domain.

The protein belongs to the universal ribosomal protein uS4 family. In terms of assembly, part of the 30S ribosomal subunit. Contacts protein S5. The interaction surface between S4 and S5 is involved in control of translational fidelity.

Its function is as follows. One of the primary rRNA binding proteins, it binds directly to 16S rRNA where it nucleates assembly of the body of the 30S subunit. With S5 and S12 plays an important role in translational accuracy. In Shewanella baltica (strain OS223), this protein is Small ribosomal subunit protein uS4.